A 181-amino-acid chain; its full sequence is Small ribosomal subunit protein bS16 (181 aa).

Residues 150–181 (KKAAEEAAKAAAEAPAEEAAPAEETATEAAAE) are disordered. The segment covering 158–181 (KAAAEAPAEEAAPAEETATEAAAE) has biased composition (low complexity).

Belongs to the bacterial ribosomal protein bS16 family.

This is Small ribosomal subunit protein bS16 from Bacteroides fragilis (strain YCH46).